Reading from the N-terminus, the 293-residue chain is Protease HtpX (293 aa).

2 consecutive transmembrane segments (helical) span residues 4 to 24 (IALF…VLSL) and 34 to 54 (GLLI…LLMS). Residue histidine 139 coordinates Zn(2+). Glutamate 140 is an active-site residue. Position 143 (histidine 143) interacts with Zn(2+). 2 helical membrane passes run 158–178 (VVNT…AGFM) and 193–213 (LIYF…ASII). Zn(2+) is bound at residue glutamate 222.

This sequence belongs to the peptidase M48B family. It depends on Zn(2+) as a cofactor.

Its subcellular location is the cell inner membrane. This chain is Protease HtpX, found in Enterobacter sp. (strain 638).